We begin with the raw amino-acid sequence, 362 residues long: MERLTVTLGERSYPITIAAGLFNDPASFWPLRAGDQTMLVTNETLAPLWLDKVRSALEQAGVKVDQVILPDGEQYKSLAVLETVFSALLEKPHGRDTTLIALGGGVIGDLTGFAAACYQRGVRFIQVPTTLLSQVDSSVGGKTAVNHPLGKNMIGAFWQPASVVVDLDCLQTLPARELASGLAEVIKYGIILDRDFFLWLEENIDALLALDGAAMAYCIRRCCEIKADVVAADERESGMRALLNLGHTFGHAIEAEMGYGNWLHGEAVAAGMVMAARAAERLGQFETQDVERIIALLKRAGLPVTGPETMPPQAYLPHMMRDKKVLAGELRLVLPLAIGKSEVRGGVPHDLVLSAIADCQQA.

NAD(+)-binding positions include 71-76 (DGEQYK), 105-109 (GVIGD), 129-130 (TT), K142, K151, and 169-172 (CLQT). 3 residues coordinate Zn(2+): E184, H247, and H264.

Belongs to the sugar phosphate cyclases superfamily. Dehydroquinate synthase family. The cofactor is Co(2+). Requires Zn(2+) as cofactor. NAD(+) is required as a cofactor.

The protein localises to the cytoplasm. It catalyses the reaction 7-phospho-2-dehydro-3-deoxy-D-arabino-heptonate = 3-dehydroquinate + phosphate. The protein operates within metabolic intermediate biosynthesis; chorismate biosynthesis; chorismate from D-erythrose 4-phosphate and phosphoenolpyruvate: step 2/7. Its function is as follows. Catalyzes the conversion of 3-deoxy-D-arabino-heptulosonate 7-phosphate (DAHP) to dehydroquinate (DHQ). The polypeptide is 3-dehydroquinate synthase (Cronobacter sakazakii (strain ATCC BAA-894) (Enterobacter sakazakii)).